The primary structure comprises 844 residues: 3',5'-cyclic-AMP phosphodiesterase 4A (844 aa).

Residues 1 to 124 (MEPPAAPSER…RSPLDSQASP (124 aa)) are disordered. Phosphoserine is present on Ser13. Over residues 36 to 46 (QPRTPIRIQQR) the composition is skewed to low complexity. Over residues 51–78 (SAERSEPERSPHRPIERADAVDTGDRPG) the composition is skewed to basic and acidic residues. The segment covering 82-91 (TRMSWPSSFH) has biased composition (polar residues). Phosphoserine is present on residues Ser147, Ser152, Ser160, Ser204, and Ser333. Residues 343–672 (VKTDQEDLLA…DWYHSAIRQS (330 aa)) form the PDEase domain. Residue Lys344 forms a Glycyl lysine isopeptide (Lys-Gly) (interchain with G-Cter in SUMO) linkage. His419 serves as the catalytic Proton donor. Residue His419 participates in 3',5'-cyclic AMP binding. AMP is bound by residues His419 and His423. Residues His423, His459, Asp460, and Asp577 each coordinate Zn(2+). Positions 460, 577, 628, and 631 each coordinate AMP. Asp460 contacts Mg(2+). Residue Asp460 participates in Mn(2+) binding. Positions 628 and 631 each coordinate 3',5'-cyclic AMP. Phosphoserine is present on residues Ser672 and Ser674. The interval 819–844 (ACSGTSGDNSAVISAPGRWGSGGDPA) is disordered. The span at 820 to 830 (CSGTSGDNSAV) shows a compositional bias: polar residues.

This sequence belongs to the cyclic nucleotide phosphodiesterase family. PDE4 subfamily. In terms of assembly, interacts with LYN (via SH3 domain). Interacts with ARRB2. It depends on Zn(2+) as a cofactor. Mg(2+) is required as a cofactor. Mn(2+) serves as cofactor. In terms of processing, proteolytically cleaved by CASP3.

The protein resides in the cytoplasm. It localises to the cytosol. The protein localises to the membrane. The catalysed reaction is 3',5'-cyclic AMP + H2O = AMP + H(+). Its pathway is purine metabolism; 3',5'-cyclic AMP degradation; AMP from 3',5'-cyclic AMP: step 1/1. Inhibited by rolipram and diazepam. Hydrolyzes the second messenger 3',5'-cyclic AMP (cAMP), which is a key regulator of many important physiological processes. Functionally, efficiently hydrolyzes cAMP. In Mus musculus (Mouse), this protein is 3',5'-cyclic-AMP phosphodiesterase 4A (Pde4a).